The sequence spans 857 residues: Glucans biosynthesis glucosyltransferase H (857 aa).

A run of 6 helical transmembrane segments spans residues 142 to 162 (ILLTLMIGQTLVAGWYMKGIL), 196 to 216 (ILILFGILFCWVSAGFWTALM), 515 to 535 (VFLTGVMSYLSAPLWFFFLVL), 572 to 592 (LFSTTIVLLFLPKLLSIILIW), 606 to 626 (TLSMLMEMLFSMLLAPVRMIF), and 682 to 702 (FLWWLAPIVGSLVLSIPVSVI).

Belongs to the glycosyltransferase 2 family. OpgH subfamily.

It localises to the cell inner membrane. Its pathway is glycan metabolism; osmoregulated periplasmic glucan (OPG) biosynthesis. Functionally, involved in the biosynthesis of osmoregulated periplasmic glucans (OPGs). The protein is Glucans biosynthesis glucosyltransferase H of Pseudomonas putida (strain W619).